The sequence spans 252 residues: Protein BTG3 (252 aa).

Residues 138–163 (VTSDYHSGSSSSDEDTSKEVDVKPSS) are disordered.

Belongs to the BTG family. In terms of tissue distribution, ubiquitous.

In terms of biological role, overexpression impairs serum-induced cell cycle progression from the G0/G1 to S phase. In Mus musculus (Mouse), this protein is Protein BTG3 (Btg3).